Reading from the N-terminus, the 96-residue chain is Nucleoid-associated protein CF0672 (96 aa).

Belongs to the YbaB/EbfC family. Homodimer.

Its subcellular location is the cytoplasm. The protein resides in the nucleoid. Binds to DNA and alters its conformation. May be involved in regulation of gene expression, nucleoid organization and DNA protection. The protein is Nucleoid-associated protein CF0672 of Chlamydia felis (strain Fe/C-56) (Chlamydophila felis).